The sequence spans 455 residues: Argininosuccinate lyase (455 aa).

Belongs to the lyase 1 family. Argininosuccinate lyase subfamily.

The protein localises to the cytoplasm. The catalysed reaction is 2-(N(omega)-L-arginino)succinate = fumarate + L-arginine. Its pathway is amino-acid biosynthesis; L-arginine biosynthesis; L-arginine from L-ornithine and carbamoyl phosphate: step 3/3. This chain is Argininosuccinate lyase, found in Shewanella oneidensis (strain ATCC 700550 / JCM 31522 / CIP 106686 / LMG 19005 / NCIMB 14063 / MR-1).